A 429-amino-acid chain; its full sequence is tRNA modification GTPase MnmE (429 aa).

Residues Arg-20, Glu-77, and Arg-117 each contribute to the (6S)-5-formyl-5,6,7,8-tetrahydrofolate site. The 141-residue stretch at Gly-213 to Ser-353 folds into the TrmE-type G domain. Asn-223 is a K(+) binding site. GTP is bound by residues Asn-223–Ser-228, Ser-242–Thr-248, and Asp-267–Gly-270. Ser-227 provides a ligand contact to Mg(2+). Ser-242, Ile-244, and Thr-247 together coordinate K(+). A Mg(2+)-binding site is contributed by Thr-248. (6S)-5-formyl-5,6,7,8-tetrahydrofolate is bound at residue Lys-429.

Belongs to the TRAFAC class TrmE-Era-EngA-EngB-Septin-like GTPase superfamily. TrmE GTPase family. As to quaternary structure, homodimer. Heterotetramer of two MnmE and two MnmG subunits. Requires K(+) as cofactor.

Its subcellular location is the cytoplasm. Functionally, exhibits a very high intrinsic GTPase hydrolysis rate. Involved in the addition of a carboxymethylaminomethyl (cmnm) group at the wobble position (U34) of certain tRNAs, forming tRNA-cmnm(5)s(2)U34. This is tRNA modification GTPase MnmE from Dinoroseobacter shibae (strain DSM 16493 / NCIMB 14021 / DFL 12).